The chain runs to 615 residues: Homologous recombination OB-fold protein (615 aa).

Disordered stretches follow at residues 42-75 (LRPV…PRLC), 213-326 (PWPS…PVTQ), and 546-590 (DFLE…FPEE). S47 carries the post-translational modification Phosphoserine. 3 stretches are compositionally biased toward polar residues: residues 47 to 71 (SRPQ…NQSV), 232 to 241 (SCVSTSQQRG), and 257 to 275 (IRSS…SPRA). Residues 302-317 (SSRAPVSSVESPVSTP) show a composition bias toward low complexity.

In terms of assembly, interacts with MCM8; this interaction is necessary for MCM8-MCM9 helicase complex recruitment to DNA damage sites. Interacts with RPA1; this interaction associates HROB with the RPA complex.

Its subcellular location is the nucleus. The protein resides in the chromosome. Its function is as follows. DNA-binding protein involved in homologous recombination that acts by recruiting the MCM8-MCM9 helicase complex to sites of DNA damage to promote DNA repair synthesis. This chain is Homologous recombination OB-fold protein, found in Mus musculus (Mouse).